A 177-amino-acid chain; its full sequence is Cell division protein ZapC (177 aa).

The protein belongs to the ZapC family. As to quaternary structure, interacts directly with FtsZ.

It is found in the cytoplasm. Functionally, contributes to the efficiency of the cell division process by stabilizing the polymeric form of the cell division protein FtsZ. Acts by promoting interactions between FtsZ protofilaments and suppressing the GTPase activity of FtsZ. The sequence is that of Cell division protein ZapC from Shewanella frigidimarina (strain NCIMB 400).